Reading from the N-terminus, the 476-residue chain is Ribosomal RNA small subunit methyltransferase F (476 aa).

Residues 124–130 (ASAPGSK), Glu148, Asp175, and Asp193 contribute to the S-adenosyl-L-methionine site. Cys246 functions as the Nucleophile in the catalytic mechanism.

It belongs to the class I-like SAM-binding methyltransferase superfamily. RsmB/NOP family.

It localises to the cytoplasm. It carries out the reaction cytidine(1407) in 16S rRNA + S-adenosyl-L-methionine = 5-methylcytidine(1407) in 16S rRNA + S-adenosyl-L-homocysteine + H(+). Specifically methylates the cytosine at position 1407 (m5C1407) of 16S rRNA. This chain is Ribosomal RNA small subunit methyltransferase F, found in Photobacterium profundum (strain SS9).